Consider the following 127-residue polypeptide: MAYRKLGRTSAHRKAMLRNLTTDLIVNEKIVTTETRAKEVRKFVEKMITLGKKGDLASRRRAAAFVMNVVADVKEENDDVVVQSALQKLFDDLAPRFAERNGGYTRILKMSERRGDAAKMVVLELVD.

This sequence belongs to the bacterial ribosomal protein bL17 family. As to quaternary structure, part of the 50S ribosomal subunit. Contacts protein L32.

In Ligilactobacillus salivarius (strain UCC118) (Lactobacillus salivarius), this protein is Large ribosomal subunit protein bL17.